The following is a 189-amino-acid chain: dCTP deaminase (189 aa).

DCTP is bound by residues 112–117 (KSTYAR), 136–138 (TLE), glutamine 157, tyrosine 171, and glutamine 181. Catalysis depends on glutamate 138, which acts as the Proton donor/acceptor.

The protein belongs to the dCTP deaminase family. Homotrimer.

It catalyses the reaction dCTP + H2O + H(+) = dUTP + NH4(+). The protein operates within pyrimidine metabolism; dUMP biosynthesis; dUMP from dCTP (dUTP route): step 1/2. Its function is as follows. Catalyzes the deamination of dCTP to dUTP. The chain is dCTP deaminase from Acinetobacter baylyi (strain ATCC 33305 / BD413 / ADP1).